Reading from the N-terminus, the 507-residue chain is Beta-glucosidase 3 (507 aa).

Residues 1-23 (MELTLSLLTIFLLFFALSGRCSD) form the signal peptide. Position 41 (Q41) interacts with a beta-D-glucoside. N64 carries an N-linked (GlcNAc...) asparagine glycan. A beta-D-glucoside contacts are provided by residues H138 and 183-184 (NE). The active-site Proton donor is E184. An intrachain disulfide couples C203 to C210. N-linked (GlcNAc...) asparagine glycans are attached at residues N209 and N214. Y326 contacts a beta-D-glucoside. N-linked (GlcNAc...) asparagine glycosylation is present at N361. Residue E394 participates in a beta-D-glucoside binding. Catalysis depends on E394, which acts as the Nucleophile. The N-linked (GlcNAc...) asparagine glycan is linked to N429. Residues W439 and F455 each coordinate a beta-D-glucoside. N-linked (GlcNAc...) asparagine glycosylation is found at N461, N485, and N500.

It belongs to the glycosyl hydrolase 1 family.

It catalyses the reaction Hydrolysis of terminal, non-reducing beta-D-glucosyl residues with release of beta-D-glucose.. In Arabidopsis thaliana (Mouse-ear cress), this protein is Beta-glucosidase 3.